The chain runs to 315 residues: Porphobilinogen deaminase (315 aa).

Cys-234 bears the S-(dipyrrolylmethanemethyl)cysteine mark.

The protein belongs to the HMBS family. In terms of assembly, monomer. The cofactor is dipyrromethane.

The enzyme catalyses 4 porphobilinogen + H2O = hydroxymethylbilane + 4 NH4(+). It functions in the pathway porphyrin-containing compound metabolism; protoporphyrin-IX biosynthesis; coproporphyrinogen-III from 5-aminolevulinate: step 2/4. Tetrapolymerization of the monopyrrole PBG into the hydroxymethylbilane pre-uroporphyrinogen in several discrete steps. This is Porphobilinogen deaminase (hemC) from Mycobacterium leprae (strain TN).